The sequence spans 217 residues: Probable cutinase 3 (217 aa).

The first 17 residues, 1–17, serve as a signal peptide directing secretion; it reads MSLRSLFVAGLATLALA. Disulfide bonds link Cys39–Cys118 and Cys65–Cys79. Ser129 (nucleophile) is an active-site residue. Cys180 and Cys187 are disulfide-bonded. The active site involves Asp184. The Proton donor/acceptor role is filled by His197.

This sequence belongs to the cutinase family.

It localises to the secreted. It catalyses the reaction cutin + H2O = cutin monomers.. Its function is as follows. Catalyzes the hydrolysis of complex carboxylic polyesters found in the cell wall of plants. Degrades cutin, a macromolecule that forms the structure of the plant cuticle. The polypeptide is Probable cutinase 3 (Aspergillus fumigatus (strain CBS 144.89 / FGSC A1163 / CEA10) (Neosartorya fumigata)).